Consider the following 396-residue polypeptide: Phosphoglycerate kinase (396 aa).

Substrate-binding positions include 21–23, Arg-36, 59–62, Arg-113, and Arg-146; these read DLN and HLGR. Residues Lys-197, Glu-319, and 345–348 contribute to the ATP site; that span reads GGDT.

Belongs to the phosphoglycerate kinase family. In terms of assembly, monomer.

It is found in the cytoplasm. It catalyses the reaction (2R)-3-phosphoglycerate + ATP = (2R)-3-phospho-glyceroyl phosphate + ADP. It functions in the pathway carbohydrate degradation; glycolysis; pyruvate from D-glyceraldehyde 3-phosphate: step 2/5. The protein is Phosphoglycerate kinase of Legionella pneumophila (strain Paris).